The following is a 633-amino-acid chain: Dynein axonemal assembly factor 1 (633 aa).

A disordered region spans residues 1–80 (MHPEASEPPV…SRDDRDDRGP (80 aa)). The span at 22–42 (AGDHGDAGPGVRKEEINETKE) shows a compositional bias: basic and acidic residues. A compositionally biased stretch (low complexity) spans 46–60 (GPCTTSCQSQQQPSG). Over residues 70–80 (HSRDDRDDRGP) the composition is skewed to basic and acidic residues. LRR repeat units lie at residues 101 to 123 (ALND…EEYT), 124 to 145 (GLRC…QAQS), 146 to 167 (ELRC…EPLQ), 168 to 189 (KLDA…SCLP), 190 to 211 (VLNT…EHLR), and 215 to 236 (QLCV…SVLE). The LRRCT domain maps to 249–288 (NPVTKHIPNYRRTVTVRLKHLTYLDDRPVFPKDRACAEAW). A compositionally biased stretch (basic and acidic residues) spans 326–344 (EERKKARDRGETPLPESEK). 2 disordered regions span residues 326–364 (EERK…TQQK) and 404–436 (LSGN…RTED). Serine 349 carries the post-translational modification Phosphoserine. Over residues 352 to 364 (AQEKPPKGETQQK) the composition is skewed to basic and acidic residues. Positions 413–427 (TPVVVTPEEVTSPVE) are enriched in low complexity. Phosphothreonine is present on threonine 462. 2 positions are modified to phosphoserine: serine 465 and serine 488. 2 stretches are compositionally biased toward polar residues: residues 538 to 555 (TTDL…SSHP) and 568 to 592 (GESN…SEGG). The interval 538-633 (TTDLETQSQD…GLEDIEFGLD (96 aa)) is disordered.

Belongs to the DNAAF1 family.

It is found in the cell projection. It localises to the cilium. In terms of biological role, cilium-specific protein required for the stability of the ciliary architecture. Plays a role in cytoplasmic preassembly of dynein arms. Involved in regulation of microtubule-based cilia and actin-based brush border microvilli. This is Dynein axonemal assembly factor 1 (Dnaaf1) from Rattus norvegicus (Rat).